We begin with the raw amino-acid sequence, 239 residues long: Ribose-5-phosphate isomerase A (239 aa).

Substrate-binding positions include 34–37 (TGST), 94–97 (DGAD), and 107–110 (KGGG). Glu116 functions as the Proton acceptor in the catalytic mechanism. Residue Lys134 coordinates substrate.

It belongs to the ribose 5-phosphate isomerase family. Homodimer.

It catalyses the reaction aldehydo-D-ribose 5-phosphate = D-ribulose 5-phosphate. The protein operates within carbohydrate degradation; pentose phosphate pathway; D-ribose 5-phosphate from D-ribulose 5-phosphate (non-oxidative stage): step 1/1. Its function is as follows. Catalyzes the reversible conversion of ribose-5-phosphate to ribulose 5-phosphate. The polypeptide is Ribose-5-phosphate isomerase A (Treponema denticola (strain ATCC 35405 / DSM 14222 / CIP 103919 / JCM 8153 / KCTC 15104)).